Here is a 239-residue protein sequence, read N- to C-terminus: 2,3,4,5-tetrahydropyridine-2,6-dicarboxylate N-acetyltransferase (239 aa).

The protein belongs to the transferase hexapeptide repeat family. DapH subfamily.

It catalyses the reaction (S)-2,3,4,5-tetrahydrodipicolinate + acetyl-CoA + H2O = L-2-acetamido-6-oxoheptanedioate + CoA. It functions in the pathway amino-acid biosynthesis; L-lysine biosynthesis via DAP pathway; LL-2,6-diaminopimelate from (S)-tetrahydrodipicolinate (acetylase route): step 1/3. Its function is as follows. Catalyzes the transfer of an acetyl group from acetyl-CoA to tetrahydrodipicolinate. This chain is 2,3,4,5-tetrahydropyridine-2,6-dicarboxylate N-acetyltransferase, found in Staphylococcus carnosus (strain TM300).